Consider the following 108-residue polypeptide: Glutaredoxin 4 (108 aa).

Residues 5 to 107 (IKKIQNQIQN…KTISICDKLN (103 aa)) enclose the Glutaredoxin domain. Lys22 provides a ligand contact to glutathione. Residue Cys30 coordinates [2Fe-2S] cluster. Residues Arg59, Phe71, and 84-85 (CN) contribute to the glutathione site.

This sequence belongs to the glutaredoxin family. Monothiol subfamily. In terms of assembly, homodimer.

Its subcellular location is the cytoplasm. Functionally, monothiol glutaredoxin involved in the biogenesis of iron-sulfur clusters. The protein is Glutaredoxin 4 (grxD) of Buchnera aphidicola subsp. Baizongia pistaciae (strain Bp).